Consider the following 262-residue polypeptide: ATP synthase subunit a (262 aa).

The next 6 helical transmembrane spans lie at 32-52 (IAFT…AVFV), 98-118 (LFMF…VLGI), 127-147 (FTIT…VGFW), 153-173 (FFSL…IFPI), 189-209 (LFVA…FVID), and 219-239 (LLVG…EILV).

It belongs to the ATPase A chain family. F-type ATPases have 2 components, CF(1) - the catalytic core - and CF(0) - the membrane proton channel. CF(1) has five subunits: alpha(3), beta(3), gamma(1), delta(1), epsilon(1). CF(0) has four main subunits: a, b, b' and c.

The protein localises to the cell inner membrane. In terms of biological role, key component of the proton channel; it plays a direct role in the translocation of protons across the membrane. The protein is ATP synthase subunit a of Erythrobacter litoralis (strain HTCC2594).